We begin with the raw amino-acid sequence, 369 residues long: tRNA(Met) cytidine acetate ligase (369 aa).

Residues 7–20 (VAEF…HKYL), Gly-96, Asn-152, and Arg-175 each bind ATP.

The protein belongs to the TmcAL family.

It localises to the cytoplasm. It carries out the reaction cytidine(34) in elongator tRNA(Met) + acetate + ATP = N(4)-acetylcytidine(34) in elongator tRNA(Met) + AMP + diphosphate. Its function is as follows. Catalyzes the formation of N(4)-acetylcytidine (ac(4)C) at the wobble position of elongator tRNA(Met), using acetate and ATP as substrates. First activates an acetate ion to form acetyladenylate (Ac-AMP) and then transfers the acetyl group to tRNA to form ac(4)C34. This Streptococcus agalactiae serotype Ia (strain ATCC 27591 / A909 / CDC SS700) protein is tRNA(Met) cytidine acetate ligase.